Consider the following 469-residue polypeptide: SVGFKAGVKEYKLTYYTPEYETKDTDILAAFRVTPQPGVPPEEAGXAVXXESSTGTWTAVWTDGLTSLDRYKGRCYXIEPVPGEEDQYIAYVAYPLDXFEEGSVTNMFTSIVGNVFGFKALXALRLEDLRIPPAYIKTFEGPPHGIQVERDKLNKYGRPLLXCTIKPKLGLSAKNYGRACYECLRGGLDFTKDDENVNSQPFMRWRDRFLFCAEAIYKAQAETGEIKGHYLNATAGTCEEMIKRAVFARELGVPIVMHDYLTGGFTANTSLAHYCRDNGLLLHIHRAMHAVIDRQKNHGIHFRVLAKALRMSGGDHIHSGTVVGKLEGERDITLGFVDLLRDDFIEKDRSRGIYFTQDWSSLPGVLPVXSGGIHVXHMPALTEIFGDDSVXXFGGGTLGHPWGNAPGAVANRVSLEACVKARNEGRDLAAEGNEIIREASKWSPELAAACEVWKEIRFNFAAVDTLDPS.

Lys-5 carries the post-translational modification N6,N6,N6-trimethyllysine. The substrate site is built by Asn-114 and Thr-164. Catalysis depends on Lys-166, which acts as the Proton acceptor. Lys-168 lines the substrate pocket. Positions 192, 194, and 195 each coordinate Mg(2+). Lys-192 carries the post-translational modification N6-carboxylysine. The active-site Proton acceptor is the His-285. 3 residues coordinate substrate: Arg-286, His-318, and Ser-370.

The protein belongs to the RuBisCO large chain family. Type I subfamily. As to quaternary structure, heterohexadecamer of 8 large chains and 8 small chains; disulfide-linked. The disulfide link is formed within the large subunit homodimers. Requires Mg(2+) as cofactor. The disulfide bond which can form in the large chain dimeric partners within the hexadecamer appears to be associated with oxidative stress and protein turnover.

The protein localises to the plastid. It is found in the chloroplast. It catalyses the reaction 2 (2R)-3-phosphoglycerate + 2 H(+) = D-ribulose 1,5-bisphosphate + CO2 + H2O. The catalysed reaction is D-ribulose 1,5-bisphosphate + O2 = 2-phosphoglycolate + (2R)-3-phosphoglycerate + 2 H(+). Its function is as follows. RuBisCO catalyzes two reactions: the carboxylation of D-ribulose 1,5-bisphosphate, the primary event in carbon dioxide fixation, as well as the oxidative fragmentation of the pentose substrate in the photorespiration process. Both reactions occur simultaneously and in competition at the same active site. In Calycophyllum candidissimum (Degame lemonwood tree), this protein is Ribulose bisphosphate carboxylase large chain.